Reading from the N-terminus, the 131-residue chain is Neo-calmodulin (131 aa).

EF-hand domains are found at residues 1–32 (EFKE…LGQN), 33–68 (PTEA…KMKD), 70–105 (DSEE…LGEK), and 106–131 (LTDE…YEEF). Residues aspartate 10, aspartate 12, aspartate 14, threonine 16, glutamate 21, aspartate 46, aspartate 48, asparagine 50, threonine 52, glutamate 57, aspartate 83, aspartate 85, asparagine 87, tyrosine 89, glutamate 94, aspartate 119, aspartate 121, aspartate 123, glutamine 125, and glutamate 130 each coordinate Ca(2+).

Belongs to the calmodulin family.

This is Neo-calmodulin from Gallus gallus (Chicken).